A 335-amino-acid polypeptide reads, in one-letter code: Mitochondrial amidoxime reducing component 2 (335 aa).

Residues 1–35 constitute a mitochondrion transit peptide; that stretch reads MGASSSSALARLGLPARPWPRWLGVAALGLAAVAL. Glycyl lysine isopeptide (Lys-Gly) (interchain with G-Cter in ubiquitin) cross-links involve residues Lys59, Lys138, and Lys144. N6-acetyllysine; alternate is present on Lys156. Residue Lys156 forms a Glycyl lysine isopeptide (Lys-Gly) (interchain with G-Cter in ubiquitin); alternate linkage. Residues Lys166, Lys173, Lys187, Lys287, and Lys294 each participate in a glycyl lysine isopeptide (Lys-Gly) (interchain with G-Cter in ubiquitin) cross-link. Residues 188–334 enclose the MOSC domain; it reads GRTSRKLLPT…LRVGDPVYRM (147 aa).

In terms of assembly, component of a complex composed of cytochrome b5, NADH-cytochrome b5 reductase (CYB5R3) and MTARC2. Mo-molybdopterin is required as a cofactor. Ubiquitinated by PRKN during mitophagy, leading to its degradation and enhancement of mitophagy. Deubiquitinated by USP30.

Its subcellular location is the mitochondrion outer membrane. It is found in the peroxisome. The enzyme catalyses N(omega)-hydroxy-L-arginine + 2 Fe(II)-[cytochrome b5] + 2 H(+) = L-arginine + 2 Fe(III)-[cytochrome b5] + H2O. In terms of biological role, catalyzes the reduction of N-oxygenated molecules, acting as a counterpart of cytochrome P450 and flavin-containing monooxygenases in metabolic cycles. As a component of prodrug-converting system, reduces a multitude of N-hydroxylated prodrugs particularly amidoximes, leading to increased drug bioavailability. May be involved in mitochondrial N(omega)-hydroxy-L-arginine (NOHA) reduction, regulating endogenous nitric oxide levels and biosynthesis. Postulated to cleave the N-OH bond of N-hydroxylated substrates in concert with electron transfer from NADH to cytochrome b5 reductase then to cytochrome b5, the ultimate electron donor that primes the active site for substrate reduction. The chain is Mitochondrial amidoxime reducing component 2 from Homo sapiens (Human).